The following is an 838-amino-acid chain: Shutoff protein (838 aa).

The interval 1–102 (MEDQHSAASE…EQEEDSPDRY (102 aa)) is disordered. Pro residues predominate over residues 18–35 (TLPPPPPPPPPPTSPPPS). The span at 52-65 (TCSSSSSSSASSEC) shows a compositional bias: low complexity. Residues 291–353 (LMQTLLVRRA…ACMVTVQLHC (63 aa)) are binding to host EIF4G. The RRM domain maps to 356–474 (TFLTSREMVR…SLWTGFDERT (119 aa)). Residues Y373 and Y690 each carry the phosphotyrosine; by host modification. The segment at 693–838 (PHTGEELNTA…QELRRPQRGS (146 aa)) is disordered. Residues 701–710 (TAAPSTAHHA) are compositionally biased toward low complexity. Basic and acidic residues-rich tracts occupy residues 737 to 746 (SYADRVRSEL) and 770 to 787 (HSRDAARRRGSQQRDQRQ). The segment covering 813–829 (QALLHQQQQQQEHQPAQ) has biased composition (low complexity).

The protein belongs to the adenoviridae shutoff protein family. In terms of assembly, monomer. Interacts with hexon protein; this interaction allows chaperoning and trimerization of hexon proteins. Interacts (via N-terminus) with host initiation factor EIF4G (via C-terminus). Interacts (via RRM domain) with viral mRNAs that contain the tripartite leader; this interaction allows ribosome shunting and expression of viral late mRNAs. Post-translationally, might be cleaved by the viral protease. In terms of processing, phosphorylated. Tyrosine phosphorylation enhances preferential binding to tripartite leader mRNAs and allows ribosome shunting. Methylated. Asymmetric dimethylation by host PRMT1 of the Arg/Gly-rich region may regulate shutoff protein binding to hexon and promote the capsid assembly in the nucleus.

It localises to the host cytoplasm. Protein that inhibits host translation while promoting late viral translation by ribosome shunting. Blocks host cap-dependent translation by binding to eIF4G, displacing MKNK1 from cap initiation complexes and preventing EIF4E phosphorylation. Binds to the tripartite leader sequence of viral late mRNAs and recruits host eIF4G, PABPC1/poly-A binding protein and 40S ribosomes subunits on viral mRNAs, allowing ribosome shunting and efficient translation of late viral mRNAs even though conventional translation via ribosome scanning from the cap has been shut off in the host cell. During assembly, acts as a chaperone protein that helps hexon proteins assembly into trimers. The chain is Shutoff protein from Porcine adenovirus A serotype 3 (PAdV-3).